The chain runs to 817 residues: Putative receptor protein kinase ZmPK1 (817 aa).

A signal peptide spans 1 to 28 (MPRPLAALLSTACILSFFIALFPRAASS). A Bulb-type lectin domain is found at 29–158 (RDILPLGSSL…GGNTVWQSFD (130 aa)). Over 29-472 (RDILPLGSSL…HKTGGGESKW (444 aa)) the chain is Extracellular. N-linked (GlcNAc...) asparagine glycans are attached at residues asparagine 83, asparagine 128, asparagine 228, and asparagine 279. The EGF-like domain maps to 292–328 (MTQPCNIHGLCGPNGICHYSPTPTCSCPPGYATRNPG). Cystine bridges form between cysteine 296–cysteine 308 and cysteine 302–cysteine 316. Asparagine 329 and asparagine 339 each carry an N-linked (GlcNAc...) asparagine glycan. A PAN domain is found at 342–424 (CDRYDKRSMR…VRTIYLKLPT (83 aa)). 2 cysteine pairs are disulfide-bonded: cysteine 376–cysteine 398 and cysteine 384–cysteine 386. The N-linked (GlcNAc...) asparagine glycan is linked to asparagine 452. A helical membrane pass occupies residues 473-498 (FYFYGFIAAFFVVEVSFISFAWFFVL). Topologically, residues 499-817 (KRELRPSELW…AVQTLLSADD (319 aa)) are cytoplasmic. The Protein kinase domain occupies 534–817 (RKFKVELGRG…AVQTLLSADD (284 aa)). ATP contacts are provided by residues 540–548 (LGRGESGTV) and lysine 562. Aspartate 658 acts as the Proton acceptor in catalysis.

The protein belongs to the protein kinase superfamily. Ser/Thr protein kinase family. In terms of tissue distribution, expressed predominantly in the shoots and roots of young maize seedlings, and to a lesser extent in the silks.

It is found in the membrane. The catalysed reaction is L-seryl-[protein] + ATP = O-phospho-L-seryl-[protein] + ADP + H(+). It catalyses the reaction L-threonyl-[protein] + ATP = O-phospho-L-threonyl-[protein] + ADP + H(+). Functionally, probable receptor. Interaction with a ligand in the extracellular domain triggers the protein kinase activity of the cytoplasmic domain. The sequence is that of Putative receptor protein kinase ZmPK1 (PK1) from Zea mays (Maize).